A 732-amino-acid polypeptide reads, in one-letter code: Protein FAR1-RELATED SEQUENCE 4 (732 aa).

Positions L11 to P97 constitute an FAR1 domain. The region spanning V212–P308 is the MULE domain. Residues Y490–G526 form an SWIM-type zinc finger. The disordered stretch occupies residues Q623–G683. Residues E624 to I635 show a composition bias toward polar residues.

Belongs to the FHY3/FAR1 family. In terms of tissue distribution, expressed in hypocotyls, rosette and cauline leaves, inflorescences stems, flowers and siliques.

It is found in the nucleus. Putative transcription activator involved in regulating light control of development. The polypeptide is Protein FAR1-RELATED SEQUENCE 4 (FRS4) (Arabidopsis thaliana (Mouse-ear cress)).